Consider the following 76-residue polypeptide: Acyl carrier protein (76 aa).

One can recognise a Carrier domain in the interval 2-76 (SNIEERVIKV…QSAIDFVKSR (75 aa)). Serine 37 bears the O-(pantetheine 4'-phosphoryl)serine mark.

Belongs to the acyl carrier protein (ACP) family. Post-translationally, 4'-phosphopantetheine is transferred from CoA to a specific serine of apo-ACP by AcpS. This modification is essential for activity because fatty acids are bound in thioester linkage to the sulfhydryl of the prosthetic group.

Its subcellular location is the cytoplasm. Its pathway is lipid metabolism; fatty acid biosynthesis. Carrier of the growing fatty acid chain in fatty acid biosynthesis. This is Acyl carrier protein from Dichelobacter nodosus (strain VCS1703A).